We begin with the raw amino-acid sequence, 505 residues long: MNKKVILMILDGWGKSPDPKVSAIDNANVPFINSLYKNYPSAQLRTDGLNVGLPEGQMGNSEVGHMNLGAGRIVYQDLAKINLAVAHKTLAKEQVLIDAFTYAKENNKKVHFLGLVSDGGVHSHTSHLRGLIDASQEYGLDQVYVHAFTDGRDVDPKSGAKYIHDLQDYIKDTPVKIASIVGRYYAMDRDKRWERVKLAYDLVVNGVGTPSTNPVSSVLESYEKDVTDEFIEPVVIVDENAKPLATIVEGDVVIFFNFRTDRGRELTEALSQHDFHEQNMHKLNLYYVTLTNYDETYQNVKVVYNKDNITETLGEVLEKAGKKQIRIAETEKYPHVTFFFSGGREIPFEGESRILRNSPKVATYDLQPEMSAYELADALVPELNKGEVDFVCLNFANGDMVGHTGIMEAAIKACEAVDACAKKVIDAALANDYTTIVIADHGNCETMINPDGSPNTAHTTNPVPIILVDKQLKNIQDGVLGDIAPTILELMGVQQPNAMTCHSLL.

Mn(2+) contacts are provided by Asp11 and Ser61. The Phosphoserine intermediate role is filled by Ser61. Residues His122, 152-153 (RD), Arg183, Arg189, 259-262 (RTDR), and Lys332 each bind substrate. Asp399, His403, Asp440, His441, and His458 together coordinate Mn(2+).

This sequence belongs to the BPG-independent phosphoglycerate mutase family. In terms of assembly, monomer. It depends on Mn(2+) as a cofactor.

It carries out the reaction (2R)-2-phosphoglycerate = (2R)-3-phosphoglycerate. Its pathway is carbohydrate degradation; glycolysis; pyruvate from D-glyceraldehyde 3-phosphate: step 3/5. In terms of biological role, catalyzes the interconversion of 2-phosphoglycerate and 3-phosphoglycerate. The chain is 2,3-bisphosphoglycerate-independent phosphoglycerate mutase from Flavobacterium johnsoniae (strain ATCC 17061 / DSM 2064 / JCM 8514 / BCRC 14874 / CCUG 350202 / NBRC 14942 / NCIMB 11054 / UW101) (Cytophaga johnsonae).